Consider the following 345-residue polypeptide: Phosphoribosylformylglycinamidine cyclo-ligase (345 aa).

Belongs to the AIR synthase family.

The protein localises to the cytoplasm. The enzyme catalyses 2-formamido-N(1)-(5-O-phospho-beta-D-ribosyl)acetamidine + ATP = 5-amino-1-(5-phospho-beta-D-ribosyl)imidazole + ADP + phosphate + H(+). Its pathway is purine metabolism; IMP biosynthesis via de novo pathway; 5-amino-1-(5-phospho-D-ribosyl)imidazole from N(2)-formyl-N(1)-(5-phospho-D-ribosyl)glycinamide: step 2/2. The sequence is that of Phosphoribosylformylglycinamidine cyclo-ligase from Prochlorococcus marinus (strain MIT 9313).